Reading from the N-terminus, the 715-residue chain is MNRLAKTDYSRWRMLDEDGKHTWHYLDDDEAARTWPQTLADKYYLGLPLDLPDLPTATSPLDSAINGLKFFSKLQLPPGNWGCEYGGPMFLLPGVVIAWVVTETPIPQAYAIEIKNYLMARANPVDGGWGLHSEGDSSVFGTSLNYTVLRLLGVDSEHPVMVQARGLLHRLGGALNAPHWSKFWLAVLGVCDWEVVNPVPPEAWLLPDWVPVAPWRWWVHIRQVFLPMSWIWSKRWTAAETDVVRALRRELFVQPWESIEWAAHRNDIAPTDNYHPKSWLLNSVNWILSNIWIPYLRPRSLATRAEDWVSKLIDMEDANSDYADLASVNGPLNMIVCYIRDGPDSYSVRRHRERMEEFLWVNKEGMLANGTNGVQCWDTAFLIQAVWSAGLAEDAQFKPMLVQALEFLDRQQIRENCQDQGVCYRHVRKGAWAFSNRDQGYGVSDCISEALKAVIVLQKEADGYPQLLEDQRIFDAVDTLLTYQNPSGGCASYEPTRGSEYLEMLNTAEVFGRIMVEYDYPECTSAVLTALVLFSKHWPDYRREEIQTFIQRGVDFIKRAQRPDGSWYGSWAVCFTYGTMFALECLRSAGETYENSEHVRRGCEFLLSKQREDGGWSESFQSCEQMTYIEHPTGSQVVQTAFAIIAVLSVDYPDVEPIHRGVRMIMSRQQRNGEWLQEGIEGIFNKSCAITYPNYKFIFPILALGKFGRKYPHLV.

A PFTB 1 repeat occupies 111 to 153 (AIEIKNYLMARANPVDGGWGLHSEGDSSVFGTSLNYTVLRLLG). Asp-445 functions as the Proton donor in the catalytic mechanism. 2 PFTB repeats span residues 550-590 (IQRG…RSAG) and 599-640 (VRRG…VVQT).

The protein belongs to the terpene cyclase/mutase family.

It is found in the lipid droplet. Its subcellular location is the endoplasmic reticulum membrane. It carries out the reaction (S)-2,3-epoxysqualene = lanosterol. The protein operates within steroid metabolism; ergosterol biosynthesis. In terms of biological role, lanosterol synthase; part of the third module of ergosterol biosynthesis pathway that includes the late steps of the pathway. ERG7A and ERG7B catalyze the cyclization of (S)-2,3 oxidosqualene to lanosterol, a reaction that forms the sterol core. The third module or late pathway involves the ergosterol synthesis itself through consecutive reactions that mainly occur in the endoplasmic reticulum (ER) membrane. Firstly, the squalene synthase erg9 catalyzes the condensation of 2 farnesyl pyrophosphate moieties to form squalene, which is the precursor of all steroids. Squalene synthase is crucial for balancing the incorporation of farnesyl diphosphate (FPP) into sterol and nonsterol isoprene synthesis. Secondly, squalene is converted into lanosterol by the consecutive action of the squalene epoxidase erg1 and the lanosterol synthase erg7. Then, the delta(24)-sterol C-methyltransferase erg6 methylates lanosterol at C-24 to produce eburicol. Eburicol is the substrate of the sterol 14-alpha demethylase encoded by cyp51A and cyp51B, to yield 4,4,24-trimethyl ergosta-8,14,24(28)-trienol. The C-14 reductase erg24 then reduces the C14=C15 double bond which leads to 4,4-dimethylfecosterol. A sequence of further demethylations at C-4, involving the C-4 demethylation complex containing the C-4 methylsterol oxidases erg25A or erg25B, the sterol-4-alpha-carboxylate 3-dehydrogenase erg26 and the 3-keto-steroid reductase erg27, leads to the production of fecosterol via 4-methylfecosterol. The C-8 sterol isomerase erg2 then catalyzes the reaction which results in unsaturation at C-7 in the B ring of sterols and thus converts fecosterol to episterol. The sterol-C5-desaturase erg3B then catalyzes the introduction of a C-5 double bond in the B ring to produce 5-dehydroepisterol. The 2 other sterol-C5-desaturases, erg3A and erg3C, seem to be less important in ergosterol biosynthesis. The C-22 sterol desaturase erg5 further converts 5-dehydroepisterol into ergosta-5,7,22,24(28)-tetraen-3beta-ol by forming the C-22(23) double bond in the sterol side chain. Finally, ergosta-5,7,22,24(28)-tetraen-3beta-ol is substrate of the C-24(28) sterol reductases erg4A and erg4B to produce ergosterol. Possible alternative sterol biosynthetic pathways might exist from fecosterol to ergosterol, depending on the activities of the erg3 isoforms. This chain is Lanosterol synthase erg7B, found in Aspergillus fumigatus (strain ATCC MYA-4609 / CBS 101355 / FGSC A1100 / Af293) (Neosartorya fumigata).